The sequence spans 108 residues: RNA silencing suppressor (108 aa).

Residues 47 to 50 form a basic region; the sequence is RRRR. The segment at 57–78 adopts a C4-type zinc-finger fold; the sequence is CHRCYRLWPPTVFTTRCDNKHC.

This sequence belongs to the carlaviruses nucleic acid-binding protein family.

Suppressor of viral-induced RNA silencing. Increases the accumulation of viral RNA and enhances viral cell-to-cell movement by inhibiting RNA silencing. The chain is RNA silencing suppressor from Solanum tuberosum (Potato).